The primary structure comprises 497 residues: Probable malate:quinone oxidoreductase (497 aa).

The protein belongs to the MQO family. Requires FAD as cofactor.

The catalysed reaction is (S)-malate + a quinone = a quinol + oxaloacetate. The protein operates within carbohydrate metabolism; tricarboxylic acid cycle; oxaloacetate from (S)-malate (quinone route): step 1/1. The chain is Probable malate:quinone oxidoreductase from Rhodopseudomonas palustris (strain ATCC BAA-98 / CGA009).